A 306-amino-acid chain; its full sequence is Serine/threonine-protein kinase mug51 (306 aa).

Belongs to the STK19 family.

It carries out the reaction L-seryl-[protein] + ATP = O-phospho-L-seryl-[protein] + ADP + H(+). It catalyses the reaction L-threonyl-[protein] + ATP = O-phospho-L-threonyl-[protein] + ADP + H(+). Serine/threonine-protein kinase. Has a role in meiosis. In Schizosaccharomyces pombe (strain 972 / ATCC 24843) (Fission yeast), this protein is Serine/threonine-protein kinase mug51 (mug51).